Here is a 339-residue protein sequence, read N- to C-terminus: Centromere protein N (339 aa).

Ser226 and Ser235 each carry phosphoserine.

It belongs to the CENP-N/CHL4 family. As to quaternary structure, component of the CENPA-NAC complex, at least composed of CENPA, CENPC, CENPH, CENPM, CENPN, CENPT and CENPU. The CENPA-NAC complex interacts with the CENPA-CAD complex, composed of CENPI, CENPK, CENPL, CENPO, CENPP, CENPQ, CENPR and CENPS. Interacts directly with CENPA. Identified in a centromere complex containing histones H2A, H2B and H4, and at least CENPA, CENPB, CENPC, CENPT, CENPN, HJURP, SUPT16H, SSRP1 and RSF1.

Its subcellular location is the nucleus. The protein resides in the chromosome. It is found in the centromere. It localises to the kinetochore. Functionally, component of the CENPA-NAC (nucleosome-associated) complex, a complex that plays a central role in assembly of kinetochore proteins, mitotic progression and chromosome segregation. The CENPA-NAC complex recruits the CENPA-CAD (nucleosome distal) complex and may be involved in incorporation of newly synthesized CENPA into centromeres. CENPN is the first protein to bind specifically to CENPA nucleosomes and the direct binding of CENPA nucleosomes by CENPN is required for centromere assembly. Required for chromosome congression and efficiently align the chromosomes on a metaphase plate. This Bos taurus (Bovine) protein is Centromere protein N (CENPN).